The primary structure comprises 210 residues: Large ribosomal subunit protein uL3 (210 aa).

Residues 126–150 are disordered; the sequence is VSATHGSHRNHRKPGSVGASSTPSR.

Belongs to the universal ribosomal protein uL3 family. Part of the 50S ribosomal subunit. Forms a cluster with proteins L14 and L19.

In terms of biological role, one of the primary rRNA binding proteins, it binds directly near the 3'-end of the 23S rRNA, where it nucleates assembly of the 50S subunit. The protein is Large ribosomal subunit protein uL3 of Tropheryma whipplei (strain TW08/27) (Whipple's bacillus).